Reading from the N-terminus, the 287-residue chain is Phosphatidylserine decarboxylase proenzyme (287 aa).

Residues aspartate 89, histidine 146, and serine 252 each act as charge relay system; for autoendoproteolytic cleavage activity in the active site. Serine 252 (schiff-base intermediate with substrate; via pyruvic acid; for decarboxylase activity) is an active-site residue. Position 252 is a pyruvic acid (Ser); by autocatalysis (serine 252).

Belongs to the phosphatidylserine decarboxylase family. PSD-B subfamily. Prokaryotic type I sub-subfamily. In terms of assembly, heterodimer of a large membrane-associated beta subunit and a small pyruvoyl-containing alpha subunit. Pyruvate is required as a cofactor. Is synthesized initially as an inactive proenzyme. Formation of the active enzyme involves a self-maturation process in which the active site pyruvoyl group is generated from an internal serine residue via an autocatalytic post-translational modification. Two non-identical subunits are generated from the proenzyme in this reaction, and the pyruvate is formed at the N-terminus of the alpha chain, which is derived from the carboxyl end of the proenzyme. The autoendoproteolytic cleavage occurs by a canonical serine protease mechanism, in which the side chain hydroxyl group of the serine supplies its oxygen atom to form the C-terminus of the beta chain, while the remainder of the serine residue undergoes an oxidative deamination to produce ammonia and the pyruvoyl prosthetic group on the alpha chain. During this reaction, the Ser that is part of the protease active site of the proenzyme becomes the pyruvoyl prosthetic group, which constitutes an essential element of the active site of the mature decarboxylase.

The protein localises to the cell membrane. It catalyses the reaction a 1,2-diacyl-sn-glycero-3-phospho-L-serine + H(+) = a 1,2-diacyl-sn-glycero-3-phosphoethanolamine + CO2. Its pathway is phospholipid metabolism; phosphatidylethanolamine biosynthesis; phosphatidylethanolamine from CDP-diacylglycerol: step 2/2. Its function is as follows. Catalyzes the formation of phosphatidylethanolamine (PtdEtn) from phosphatidylserine (PtdSer). The polypeptide is Phosphatidylserine decarboxylase proenzyme (Shewanella sediminis (strain HAW-EB3)).